The sequence spans 529 residues: Probable anion transporter 1, chloroplastic (529 aa).

The transit peptide at 1-55 directs the protein to the chloroplast; that stretch reads MLYLLPLSVSCRVPGSPPAPRSRRFLDPGGGRGVGDGLGGVRVFRRRALRGTDVR. Disordered stretches follow at residues 13–39 and 52–78; these read VPGSPPAPRSRRFLDPGGGRGVGDGLG and TDVRSNTSSSSSRKGRHDDARHDGGYG. The segment covering 28 to 39 has biased composition (gly residues); sequence PGGGRGVGDGLG. A compositionally biased stretch (basic and acidic residues) spans 67 to 76; the sequence is RHDDARHDGG. The next 11 membrane-spanning stretches (helical) occupy residues 120–140, 158–178, 187–207, 209–229, 251–271, 274–294, 340–360, 378–398, 418–438, 469–489, and 503–523; these read WAIVFLCFSAFLLCNMDRVNM, VGLIQSSFFWGYLLTQIAGGI, TVLGFGVIWWSIATALTPFAA, LGLPFLLVTRAFMGVGEGVAM, LVYSGMYLGSVTGLAFSPLLI, FGWPSVFYSFGSLGVFWFSTW, VWALIVSHFCHNWGTFILLTW, LFCVLPWLTMAVSANFGGWIA, IGFLGPAFFLTQLSHIDSPAM, AGVLLGLSNTAGVLAGVFGTA, and VFKVSVVLYLVGTLVWNLFST.

The protein belongs to the major facilitator superfamily. Sodium/anion cotransporter (TC 2.A.1.14) family.

Its subcellular location is the plastid. It localises to the chloroplast membrane. Its function is as follows. Probable anion transporter. This is Probable anion transporter 1, chloroplastic (PHT4;1) from Oryza sativa subsp. japonica (Rice).